Consider the following 269-residue polypeptide: F-box protein At5g52880 (269 aa).

An F-box domain is found at 109–155; that stretch reads DIDIPSLPQDILIHIFSFLEISSLVSSAQVSRSWNQATHENSLWQSQ.

This is F-box protein At5g52880 from Arabidopsis thaliana (Mouse-ear cress).